Consider the following 354-residue polypeptide: Rhodopsin (354 aa).

Residues 1–36 (MNGTEGPNFYVPMSNKTGIVRSPFEYPQYYLAEPWK) are Extracellular-facing. N-linked (GlcNAc...) asparagine glycosylation is found at Asn2 and Asn15. A helical membrane pass occupies residues 37–61 (YSVLAAYMFLLILLGLPINFMTLYV). Residues 62 to 73 (TIQHKKLRTPLN) are Cytoplasmic-facing. A helical membrane pass occupies residues 74 to 96 (YILLNLAFANHFMVLCGFTITMY). Residues 97-110 (TSLHGYFVFGQTGC) lie on the Extracellular side of the membrane. Cys110 and Cys187 are oxidised to a cystine. A helical transmembrane segment spans residues 111–133 (YFEGFFATLGGEIALWSLVVLAI). A 'Ionic lock' involved in activated form stabilization motif is present at residues 134–136 (ERY). Residues 134–152 (ERYIVVCKPMSNFRFGENH) lie on the Cytoplasmic side of the membrane. The chain crosses the membrane as a helical span at residues 153 to 173 (AMMGVAFTWIMALACAVPPLF). The Extracellular portion of the chain corresponds to 174 to 202 (GWSRYIPEGMQCSCGVDYYTLKPEVNNES). Residues 203-224 (FVIYMFVVHFLIPLIIISFCYG) form a helical membrane-spanning segment. The Cytoplasmic segment spans residues 225–252 (RLVCTVKEAAAQQQESATTQKAEKEVTR). A helical transmembrane segment spans residues 253–274 (MVVIMVIFFLICWVPYAYVAFY). Over 275–286 (IFTHQGSEFGPI) the chain is Extracellular. Residues 287 to 308 (FMTVPAFFAKSSAIYNPVIYIM) form a helical membrane-spanning segment. The residue at position 296 (Lys296) is an N6-(retinylidene)lysine. Residues 309–354 (LNKQFRNCMITTLCCGKNPFGDEDASSAATSKTEATSVSTSQVSPA) lie on the Cytoplasmic side of the membrane. S-palmitoyl cysteine attachment occurs at residues Cys322 and Cys323. The tract at residues 331–354 (EDASSAATSKTEATSVSTSQVSPA) is disordered. The segment covering 334-354 (SSAATSKTEATSVSTSQVSPA) has biased composition (low complexity).

This sequence belongs to the G-protein coupled receptor 1 family. Opsin subfamily. In terms of processing, contains one covalently linked retinal chromophore. Upon light absorption, the covalently bound 11-cis-retinal is converted to all-trans-retinal. After hydrolysis of the Schiff base and release of the covalently bound all-trans-retinal, active rhodopsin is regenerated by binding of a fresh molecule of 11-cis-retinal. In terms of tissue distribution, retina. Localized in the ventral part of the retina.

The protein localises to the membrane. It is found in the cell projection. Its subcellular location is the cilium. The protein resides in the photoreceptor outer segment. In terms of biological role, photoreceptor required for image-forming vision at low light intensity. Required for photoreceptor cell viability after birth. May use a mixture of retinal and 3-dehydroretinal as visual pigment. Light-induced isomerization of 11-cis to all-trans retinal triggers a conformational change that activates signaling via G-proteins. Subsequent receptor phosphorylation mediates displacement of the bound G-protein alpha subunit by arrestin and terminates signaling. This is Rhodopsin (RHO) from Aquarana catesbeiana (American bullfrog).